The primary structure comprises 466 residues: Transcription factor SOX-10 (466 aa).

Disordered regions lie at residues 1 to 67, 160 to 198, 213 to 275, 355 to 375, and 433 to 466; these read MAEE…DDDK, LRMQ…TDQG, DHRH…DFGN, QVKT…QPST, and RPLY…LSRP. The segment covering 23-32 has biased composition (low complexity); that stretch reads LSPSSAPSLG. Ser-24 bears the Phosphoserine mark. The segment at 62 to 102 is dimerization (DIM); it reads EADDDKFPVCIREAVSQVLSGYDWTLVPMPVRVNGASKSKP. A DNA-binding region (HMG box) is located at residues 104-172; the sequence is VKRPMNAFMV…QHKKDHPDYK (69 aa). Basic and acidic residues-rich tracts occupy residues 160–173 and 254–271; these read LRMQ…DYKY and ADPK…KPHI. The interval 228–310 is transactivation domain (TAM); that stretch reads PEHPSGQSHG…LPPNGHPGHV (83 aa). The tract at residues 353–466 is transactivation domain (TAC); sequence KAQVKTETTG…QPVYTTLSRP (114 aa). The span at 440–466 shows a compositional bias: polar residues; sequence SDPSPSGPQSHSPTHWEQPVYTTLSRP.

Monomer. Interacts with Armcx3 at the mitochondrial outer membrane surface. Interacts with PAX3. In terms of tissue distribution, predominant expression in glial cells of the nervous system.

It localises to the cytoplasm. The protein resides in the nucleus. It is found in the mitochondrion outer membrane. Transcription factor that plays a central role in developing and mature glia. Specifically activates expression of myelin genes, during oligodendrocyte (OL) maturation, such as DUSP15 and MYRF, thereby playing a central role in oligodendrocyte maturation and CNS myelination. Once induced, MYRF cooperates with SOX10 to implement the myelination program. Transcriptional activator of MITF, acting synergistically with PAX3. Transcriptional activator of MBP, via binding to the gene promoter. The polypeptide is Transcription factor SOX-10 (Sox10) (Rattus norvegicus (Rat)).